The chain runs to 260 residues: 23S rRNA (guanosine-2'-O-)-methyltransferase RlmB (260 aa).

3 residues coordinate S-adenosyl-L-methionine: glycine 197, isoleucine 217, and leucine 226.

It belongs to the class IV-like SAM-binding methyltransferase superfamily. RNA methyltransferase TrmH family. RlmB subfamily.

It localises to the cytoplasm. The catalysed reaction is guanosine(2251) in 23S rRNA + S-adenosyl-L-methionine = 2'-O-methylguanosine(2251) in 23S rRNA + S-adenosyl-L-homocysteine + H(+). Specifically methylates the ribose of guanosine 2251 in 23S rRNA. The sequence is that of 23S rRNA (guanosine-2'-O-)-methyltransferase RlmB from Nitrosomonas europaea (strain ATCC 19718 / CIP 103999 / KCTC 2705 / NBRC 14298).